A 525-amino-acid polypeptide reads, in one-letter code: Cytochrome P450 703A2 (525 aa).

Residues 3 to 23 traverse the membrane as a helical segment; that stretch reads PFLLSIILCSWIFVVVSWKKL. Residue C455 coordinates heme.

Belongs to the cytochrome P450 family. Requires heme as cofactor.

The protein resides in the membrane. It carries out the reaction dodecanoate + reduced [NADPH--hemoprotein reductase] + O2 = 7-hydroxydodecanoate + oxidized [NADPH--hemoprotein reductase] + H2O + H(+). Its function is as follows. Involved in pollen exine and anther epicuticular layer development. Catalyzes the in-chain hydroxylation of lauric acid (C12:0) preferentially on position 7, generating 7-hydroxylated lauric acid. Does not possess activity with other fatty acids (C14:0, C16:0, C16:1, and C18:0). Participates in a conserved pathway of in-chain hydroxylation of lauric acid required for anther cuticle and pollen exine formation. Directly regulated by TDR, a known regulator of tapetum programmed cell death (PCD) and pollen exine formation. The chain is Cytochrome P450 703A2 from Oryza sativa subsp. japonica (Rice).